The primary structure comprises 294 residues: 4-hydroxy-tetrahydrodipicolinate synthase (294 aa).

Thr-47 is a pyruvate binding site. Residue Tyr-136 is the Proton donor/acceptor of the active site. Lys-164 serves as the catalytic Schiff-base intermediate with substrate. Val-206 contacts pyruvate.

The protein belongs to the DapA family. Homotetramer; dimer of dimers.

The protein localises to the cytoplasm. It catalyses the reaction L-aspartate 4-semialdehyde + pyruvate = (2S,4S)-4-hydroxy-2,3,4,5-tetrahydrodipicolinate + H2O + H(+). It participates in amino-acid biosynthesis; L-lysine biosynthesis via DAP pathway; (S)-tetrahydrodipicolinate from L-aspartate: step 3/4. Catalyzes the condensation of (S)-aspartate-beta-semialdehyde [(S)-ASA] and pyruvate to 4-hydroxy-tetrahydrodipicolinate (HTPA). This Nostoc sp. (strain PCC 7120 / SAG 25.82 / UTEX 2576) protein is 4-hydroxy-tetrahydrodipicolinate synthase.